Reading from the N-terminus, the 421-residue chain is Testin (421 aa).

Positions 92 to 199 (MILTNPVAAK…GDVKLPREMD (108 aa)) constitute a PET domain. Residues 134–164 (KQPVAGSEGAQYRKKQLAKQLPAHDQDPSKC) are disordered. Residues 155 to 164 (PAHDQDPSKC) show a composition bias toward basic and acidic residues. 3 LIM zinc-binding domains span residues 234–297 (YSCY…CDSE), 299–359 (PRCA…NHAV), and 362–421 (QGCH…KMMS).

The protein belongs to the prickle / espinas / testin family. In terms of assembly, interacts via LIM domain 1 with ZYX. Interacts (via LIM domain 3) with ENAH and VASP. Interacts with ALKBH4, talin, actin, alpha-actinin, GRIP1 and PXN. Interacts (via LIM domain 2) with ACTL7A (via N-terminus). Heterodimer with ACTL7A; the heterodimer interacts with ENAH to form a heterotrimer.

Its subcellular location is the cytoplasm. The protein resides in the cell junction. The protein localises to the focal adhesion. Functionally, scaffold protein that may play a role in cell adhesion, cell spreading and in the reorganization of the actin cytoskeleton. Plays a role in the regulation of cell proliferation. May act as a tumor suppressor. The polypeptide is Testin (TES) (Rhinolophus ferrumequinum (Greater horseshoe bat)).